A 365-amino-acid chain; its full sequence is Undecaprenyl-phosphate alpha-N-acetylglucosaminyl 1-phosphate transferase (365 aa).

10 helical membrane passes run 3-23, 45-65, 99-119, 132-152, 157-177, 187-207, 213-233, 242-262, 293-313, and 315-335; these read LLTM…FLFV, GLIP…AFLI, IRAF…GLYL, VLGP…INAF, GIDG…GILL, LWCF…LGLL, VFMG…ILLQ, INPV…IAIM, QAFV…VIGE, and LTFI…LLYG.

It belongs to the glycosyltransferase 4 family. WecA subfamily. Mg(2+) serves as cofactor. Requires Mn(2+) as cofactor.

It is found in the cell inner membrane. The catalysed reaction is di-trans,octa-cis-undecaprenyl phosphate + UDP-N-acetyl-alpha-D-glucosamine = N-acetyl-alpha-D-glucosaminyl-di-trans,octa-cis-undecaprenyl diphosphate + UMP. Its pathway is bacterial outer membrane biogenesis; LPS O-antigen biosynthesis. It participates in bacterial outer membrane biogenesis; enterobacterial common antigen biosynthesis. Functionally, catalyzes the transfer of the GlcNAc-1-phosphate moiety from UDP-GlcNAc onto the carrier lipid undecaprenyl phosphate (C55-P), yielding GlcNAc-pyrophosphoryl-undecaprenyl (GlcNAc-PP-C55). The chain is Undecaprenyl-phosphate alpha-N-acetylglucosaminyl 1-phosphate transferase from Yersinia pestis.